A 200-amino-acid chain; its full sequence is ATP-dependent Clp protease proteolytic subunit (200 aa).

Ser104 functions as the Nucleophile in the catalytic mechanism. Residue His129 is part of the active site.

This sequence belongs to the peptidase S14 family. Fourteen ClpP subunits assemble into 2 heptameric rings which stack back to back to give a disk-like structure with a central cavity, resembling the structure of eukaryotic proteasomes.

It localises to the cytoplasm. It carries out the reaction Hydrolysis of proteins to small peptides in the presence of ATP and magnesium. alpha-casein is the usual test substrate. In the absence of ATP, only oligopeptides shorter than five residues are hydrolyzed (such as succinyl-Leu-Tyr-|-NHMec, and Leu-Tyr-Leu-|-Tyr-Trp, in which cleavage of the -Tyr-|-Leu- and -Tyr-|-Trp bonds also occurs).. Functionally, cleaves peptides in various proteins in a process that requires ATP hydrolysis. Has a chymotrypsin-like activity. Plays a major role in the degradation of misfolded proteins. The sequence is that of ATP-dependent Clp protease proteolytic subunit from Rubrobacter xylanophilus (strain DSM 9941 / JCM 11954 / NBRC 16129 / PRD-1).